Consider the following 464-residue polypeptide: tRNA(Ile)-lysidine synthase (464 aa).

26–31 (SGGPDS) is a binding site for ATP.

Belongs to the tRNA(Ile)-lysidine synthase family.

It is found in the cytoplasm. It carries out the reaction cytidine(34) in tRNA(Ile2) + L-lysine + ATP = lysidine(34) in tRNA(Ile2) + AMP + diphosphate + H(+). Ligates lysine onto the cytidine present at position 34 of the AUA codon-specific tRNA(Ile) that contains the anticodon CAU, in an ATP-dependent manner. Cytidine is converted to lysidine, thus changing the amino acid specificity of the tRNA from methionine to isoleucine. This chain is tRNA(Ile)-lysidine synthase, found in Geobacillus kaustophilus (strain HTA426).